A 337-amino-acid polypeptide reads, in one-letter code: Biotin synthase 1 (337 aa).

Residues 1–23 form a disordered region; it reads MSSVLTQPLAFHPPRPAVQPREH. One can recognise a Radical SAM core domain in the interval 57-284; sequence TRVEFATLLS…TARVRLSAGR (228 aa). [4Fe-4S] cluster is bound by residues Cys-72, Cys-76, and Cys-79. Residues Cys-116, Cys-147, Cys-207, and Arg-279 each coordinate [2Fe-2S] cluster.

Belongs to the radical SAM superfamily. Biotin synthase family. In terms of assembly, homodimer. Requires [4Fe-4S] cluster as cofactor. [2Fe-2S] cluster is required as a cofactor.

The enzyme catalyses (4R,5S)-dethiobiotin + (sulfur carrier)-SH + 2 reduced [2Fe-2S]-[ferredoxin] + 2 S-adenosyl-L-methionine = (sulfur carrier)-H + biotin + 2 5'-deoxyadenosine + 2 L-methionine + 2 oxidized [2Fe-2S]-[ferredoxin]. Its pathway is cofactor biosynthesis; biotin biosynthesis; biotin from 7,8-diaminononanoate: step 2/2. Its function is as follows. Catalyzes the conversion of dethiobiotin (DTB) to biotin by the insertion of a sulfur atom into dethiobiotin via a radical-based mechanism. This Polaromonas sp. (strain JS666 / ATCC BAA-500) protein is Biotin synthase 1.